The following is a 629-amino-acid chain: tRNA uridine 5-carboxymethylaminomethyl modification enzyme MnmG (629 aa).

FAD-binding positions include 13–18 (GGGHAG), Val-125, and Ser-180. 273–287 (GPRYCPSIEDKVMRF) contacts NAD(+). Gln-370 serves as a coordination point for FAD.

Belongs to the MnmG family. As to quaternary structure, homodimer. Heterotetramer of two MnmE and two MnmG subunits. It depends on FAD as a cofactor.

It localises to the cytoplasm. Functionally, NAD-binding protein involved in the addition of a carboxymethylaminomethyl (cmnm) group at the wobble position (U34) of certain tRNAs, forming tRNA-cmnm(5)s(2)U34. This is tRNA uridine 5-carboxymethylaminomethyl modification enzyme MnmG from Escherichia coli O139:H28 (strain E24377A / ETEC).